The primary structure comprises 265 residues: tRNA pseudouridine synthase A (265 aa).

Aspartate 58 serves as the catalytic Nucleophile. Tyrosine 116 is a binding site for substrate.

Belongs to the tRNA pseudouridine synthase TruA family. In terms of assembly, homodimer.

It catalyses the reaction uridine(38/39/40) in tRNA = pseudouridine(38/39/40) in tRNA. Its function is as follows. Formation of pseudouridine at positions 38, 39 and 40 in the anticodon stem and loop of transfer RNAs. This chain is tRNA pseudouridine synthase A, found in Neisseria meningitidis serogroup C / serotype 2a (strain ATCC 700532 / DSM 15464 / FAM18).